Consider the following 173-residue polypeptide: Photosystem I assembly protein Ycf3 (173 aa).

TPR repeat units follow at residues 35–68 (AFVY…EEDT), 72–105 (GYIL…NPRL), and 120–153 (GEKE…APNN).

The protein belongs to the Ycf3 family.

Its subcellular location is the cellular thylakoid membrane. Functionally, essential for the assembly of the photosystem I (PSI) complex. May act as a chaperone-like factor to guide the assembly of the PSI subunits. The sequence is that of Photosystem I assembly protein Ycf3 from Nostoc punctiforme (strain ATCC 29133 / PCC 73102).